Consider the following 1088-residue polypeptide: Myocardin-related transcription factor B (1088 aa).

E22 carries the phosphoserine modification. An RPEL 1 repeat occupies 40 to 65 (EVLQLRLQQRRTREQLVDQGIMPPLK). The residue at position 66 (S66) is a Phosphoserine. RPEL repeat units lie at residues 84–109 (NFLKHKIRSRPDRSELVRMHILEETF) and 128–153 (DDLNEKIAQRPGPMELVEKNILPVDS). 4 disordered regions span residues 165–310 (EDYP…NEPQ), 349–389 (KPLN…PSSL), 472–508 (AELPPTGTSNATRVENVHSPLPISPSPSEQSSLSTDD), and 528–553 (LSSSPLRMTNNEDSLSPTSSTLSNLE). Residues 197–213 (SAASPSEPKVSESPSPV) show a composition bias toward low complexity. A compositionally biased stretch (polar residues) spans 214–226 (TTNTPAQFASVSP). Pro residues predominate over residues 238-248 (ADQPPPRPAAP). Residues 272–287 (NPNDKHRSKKCKDPKP) are compositionally biased toward basic and acidic residues. Low complexity predominate over residues 355 to 366 (NSNSGNSALNNA). T367 and T370 each carry phosphothreonine. The segment covering 367–378 (TPNTPRQNTSTP) has biased composition (polar residues). The SAP domain maps to 389–423 (LDDLKVSELKTELKLRGLPVSGTKPDLIERLKPYQ). A compositionally biased stretch (polar residues) spans 528–540 (LSSSPLRMTNNED). A phosphoserine mark is found at S541 and S543. Residues 541–550 (SLSPTSSTLS) show a composition bias toward low complexity. Residues 545–601 (TSSTLSNLELDAAEKDRKLQEKEKQIEELKRKLEQEQKLVEVLKMQLEVEKRGQQQR) adopt a coiled-coil conformation. The interval 563–591 (LQEKEKQIEELKRKLEQEQKLVEVLKMQL) is required for interaction with itself and with MRTFA. 2 disordered regions span residues 595-655 (KRGQ…QPVS) and 829-886 (NAPL…STQA). K628 participates in a covalent cross-link: Glycyl lysine isopeptide (Lys-Gly) (interchain with G-Cter in SUMO1). The span at 829 to 838 (NAPLPSLQNG) shows a compositional bias: polar residues. Residues 867-879 (KTKDPPRYEEAIK) are compositionally biased toward basic and acidic residues. Residue S921 is modified to Phosphoserine.

Interacts with MRTFA and SRF. O-glycosylated.

The protein localises to the nucleus. In terms of biological role, acts as a transcriptional coactivator of serum response factor (SRF). Required for skeletal myogenic differentiation. This Homo sapiens (Human) protein is Myocardin-related transcription factor B.